Here is a 607-residue protein sequence, read N- to C-terminus: SNW/SKI-interacting protein A (607 aa).

Disordered regions lie at residues 29–77 (ERYG…GGAF), 178–205 (AQPK…AAFN), 217–265 (EMAQ…IPPC), 327–434 (LQLK…DRDR), and 516–607 (KVMK…ERGR). Residues 35 to 49 (SAQSDAAAAAAKPSG) are compositionally biased toward low complexity. The segment at 190–353 (SKFIKYKPSQ…QKARMERTGA (164 aa)) is SNW. The span at 240-251 (PPVPVMHSPPRP) shows a compositional bias: pro residues. Coiled coils occupy residues 313–349 (AREA…ARME) and 391–418 (EREA…LEAR). Composition is skewed to basic and acidic residues over residues 327–339 (LQLK…EQEL), 379–434 (EQPR…DRDR), 516–527 (KVMKTDRFKPDK), 535–550 (RSGK…KQEE), and 562–571 (EVKKGKKAVE).

Belongs to the SNW family. Interacts with FLO6/SIP4. Interacts with DIS1. In terms of tissue distribution, widely expressed.

It localises to the nucleus. Acts as a positive regulator of drought and salt tolerance. Acts as a positive regulator of cell viability. This is SNW/SKI-interacting protein A from Oryza sativa subsp. japonica (Rice).